The chain runs to 1435 residues: Sterol 3-beta-glucosyltransferase (1435 aa).

4 disordered regions span residues 1 to 26 (MAPD…HQVA), 75 to 107 (SDEE…KFEG), 123 to 169 (RFSS…KDTP), and 185 to 206 (PSFE…RTSP). Positions 85–99 (TRQSSESHINRSSID) are enriched in polar residues. Residues 123-133 (RFSSRSKSKSS) show a composition bias toward low complexity. Residues 134–143 (NTIARGSRTP) show a composition bias toward polar residues. Basic and acidic residues predominate over residues 189–206 (MPRKSKDPAEVDDERTSP). Residues 211–258 (ERLMEIFKFETPEDVLEEYPCWLMKSVLLQGYMYITTKHICFYAYLPK) enclose the GRAM 1 domain. Residues 262 to 360 (EVVKSGYLSK…WVKALQKIIF (99 aa)) form the PH domain. 4 disordered regions span residues 444 to 477 (LSTA…PNAP), 527 to 594 (DLNR…QASA), 610 to 671 (QHSP…QAEI), and 727 to 759 (GKKH…ATPA). Basic and acidic residues predominate over residues 527 to 537 (DLNRLTTEHHR). Polar residues-rich tracts occupy residues 539–554 (NSAN…STNR), 628–647 (KSRS…TRTQ), and 657–671 (TTGS…QAEI). Positions 729-742 (KHYEEPHGIPRDNE) are enriched in basic and acidic residues. The GRAM 2 domain occupies 760–826 (DRFRDHFALP…KDIENVDKEK (67 aa)). Residues Ser-949, Arg-950, Asp-952, Ala-1252, His-1254, His-1267, Gly-1271, Thr-1272, Asp-1291, and Gln-1292 each contribute to the UDP-alpha-D-glucose site.

This sequence belongs to the glycosyltransferase 28 family.

Its subcellular location is the cytoplasm. The protein resides in the preautophagosomal structure membrane. It carries out the reaction a sterol + UDP-alpha-D-glucose = a sterol 3-beta-D-glucoside + UDP + H(+). The enzyme catalyses ergosterol + UDP-alpha-D-glucose = ergosteryl 3-beta-D-glucoside + UDP + H(+). Its function is as follows. Sterol glycosyltransferase responsible for the glycosylation of ergosterol to form ergosterol-glucoside. The polypeptide is Sterol 3-beta-glucosyltransferase (Sclerotinia sclerotiorum (strain ATCC 18683 / 1980 / Ss-1) (White mold)).